We begin with the raw amino-acid sequence, 1863 residues long: Calcineurin-binding protein 1 (1863 aa).

TPR repeat units follow at residues 30 to 65, 81 to 116, and 118 to 150; these read LSQT…ITNS, FLAL…DAKD, and VLWN…SPNN. The interval 315-361 is disordered; the sequence is ERESGGSVKEKEPVFSEEHPQERRSTRLERLRNQKPEKEGLEFDNSK. TPR repeat units follow at residues 543 to 576, 602 to 637, 866 to 900, 955 to 988, 990 to 1009, 1011 to 1031, 1143 to 1183, 1226 to 1263, 1264 to 1297, 1306 to 1339, 1377 to 1412, and 1508 to 1541; these read ARYF…LGRE, IHEI…LAPL, INSP…EKNE, QCFF…DYQT, EQCV…SSRT, LVKL…PPDD, FESW…SQRV, VPFY…RQDW, SHAF…NPSA, ASRL…KDTA, EGVW…LAQG, and NSLR…SMSR. The span at 894 to 923 shows a compositional bias: basic and acidic residues; that stretch reads VHVEKNENNKTESKKDGSEEQVGYREKEQS. Positions 894-941 are disordered; the sequence is VHVEKNENNKTESKKDGSEEQVGYREKEQSEQQSKQIPEHTEEVAEEE. A disordered region spans residues 1813 to 1840; the sequence is KMKRGASTSSVVPSVQSGGTSEPEPAPK. Residues 1818-1832 show a composition bias toward polar residues; it reads ASTSSVVPSVQSGGT.

In terms of assembly, component of the HIRA complex made of UBN1, UBN2, ASF1A, CABIN1 and HIRA. Expressed at low levels in seedlings.

It localises to the nucleus. May be required for replication-independent chromatin assembly. The sequence is that of Calcineurin-binding protein 1 from Arabidopsis thaliana (Mouse-ear cress).